The primary structure comprises 248 residues: MIDRSLIVFFTACYPTAEKTVEFMLTAAESGADVIELGVPFSDPVADGKTIQESYVRALRNFRVERVFEIAKAFRAESDKPLVLMSYYNPIYRRGVESFVEKAYSSGIDAMLVVDLPYDEAGDFVEVCSRTGMKNVFLAAPNTPEDRLRAMDELSAFVYLVSTYGVTGERDRISPLAFEALKRAKGICRKPVAVGFGVSKADHVRQLISAGADGVVVGSAFVRLINEKGERATEDIRALTENLRSGLV.

Residues Glu-36 and Asp-47 each act as proton acceptor in the active site.

This sequence belongs to the TrpA family. In terms of assembly, tetramer of two alpha and two beta chains.

The enzyme catalyses (1S,2R)-1-C-(indol-3-yl)glycerol 3-phosphate + L-serine = D-glyceraldehyde 3-phosphate + L-tryptophan + H2O. Its pathway is amino-acid biosynthesis; L-tryptophan biosynthesis; L-tryptophan from chorismate: step 5/5. Its function is as follows. The alpha subunit is responsible for the aldol cleavage of indoleglycerol phosphate to indole and glyceraldehyde 3-phosphate. This is Tryptophan synthase alpha chain from Archaeoglobus fulgidus (strain ATCC 49558 / DSM 4304 / JCM 9628 / NBRC 100126 / VC-16).